We begin with the raw amino-acid sequence, 193 residues long: dCTP deaminase (193 aa).

DCTP-binding positions include 110 to 115, Asp-128, 136 to 138, Tyr-171, Lys-178, and Gln-182; these read RSSLAR and VLE. Catalysis depends on Glu-138, which acts as the Proton donor/acceptor.

The protein belongs to the dCTP deaminase family. As to quaternary structure, homotrimer.

The enzyme catalyses dCTP + H2O + H(+) = dUTP + NH4(+). It participates in pyrimidine metabolism; dUMP biosynthesis; dUMP from dCTP (dUTP route): step 1/2. In terms of biological role, catalyzes the deamination of dCTP to dUTP. The polypeptide is dCTP deaminase (Buchnera aphidicola subsp. Baizongia pistaciae (strain Bp)).